The chain runs to 303 residues: N-acetyl-D-glucosamine kinase (303 aa).

ATP-binding positions include 4-11 and 133-140; these read GFDIGGSK and GVGGGLIV. 4 residues coordinate Zn(2+): His-157, Cys-177, Cys-179, and Cys-184.

This sequence belongs to the ROK (NagC/XylR) family. NagK subfamily.

The catalysed reaction is N-acetyl-D-glucosamine + ATP = N-acetyl-D-glucosamine 6-phosphate + ADP + H(+). Its pathway is cell wall biogenesis; peptidoglycan recycling. In terms of biological role, catalyzes the phosphorylation of N-acetyl-D-glucosamine (GlcNAc) derived from cell-wall degradation, yielding GlcNAc-6-P. The chain is N-acetyl-D-glucosamine kinase from Erwinia tasmaniensis (strain DSM 17950 / CFBP 7177 / CIP 109463 / NCPPB 4357 / Et1/99).